Here is a 3414-residue protein sequence, read N- to C-terminus: MVKKAILKGKGGGPPRRVSKETATKTRQPRVQMPNGLVLMRMMGILWHAVAGTARNPVLKAFWNSVPLKQATAALRKIKRTVSALMVGLQKRGKRRSATDWMSWLLVITLLGMTIAATVRKERDGSTVIRAEGKDAATQVRVENGTCVILATDMGSWCDDSLSYECVTIDQGEEPVDVDCFCRNVDGVYLEYGRCGKQEGSRTRRSVLIPSHAQGELTGRGHKWLEGDSLRTHLTRVEGWVWKNRLLALAMVTVVWLTLESVVTRVAVLVVLLCLAPVYASRCTHLENRDFVTGTQGTTRVTLVLELGGCVTITAEGKPSMDVWLDAIYQENPAQTREYCLHAKLSDTKVAARCPTMGPATLAEEHQGGTVCKRDQSDRGWGNHCGLFGKGSIVACVKAACEAKKKATGHVYDANKIVYTVKVEPHTGDYVAANETHSGRKTASFTVSSEKTILTMGEYGDVSLLCRVASGVDLAQTVILELDKTVEHLPTAWQVHRDWFNDLALPWKHEGARNWNNAERLVEFGAPHAVKMDVYNLGDQTGVLLKALAGVPVAHIEGTKYHLKSGHVTCEVGLEKLKMKGLTYTMCDKTKFTWKRAPTDSGHDTVVMEVTFSGTKPCRIPVRAVAHGSPDVNVAMLITPNPTIENNGGGFIEMQLPPGDNIIYVGELSYQWFQKGSSIGRVFQKTKKGIERLTVIGEHAWDFGSAGGFLSSIGKALHTVLGGAFNSIFGGVGFLPKLLLGVALAWLGLNMRNPTMSMSFLLAGVLVLAMTLGVGADVGCAVDTERMELRCGEGLVVWREVSEWYDNYAYYPETPGALASAIKETFEEGSCGVVPQNRLEMAMWRSSVTELNLALAEGEANLTVMVDKFDPTDYRGGVPGLLKKGKDIKVSWKSWGHSMIWSIPEAPRRFMVGTEGQSECPLERRKTGVFTVAEFGVGLRTKVFLDFRQEPTHECDTGVMGAAVKNGMAIHTDQSLWMRSMKNDTGTYIVELLVTDLRNCSWPASHTIDNADVVDSELFLPASLAGPRSWYNRIPGYSEQVKGPWKHTPIRVIREECPGTTVTINAKCDKRGASVRSTTESGKVIPEWCCRACTMPPVTFRTGTDCWYAMEIRPVHDQGGLVRSMVVADNGELLSEGGVPGIVALFVVLEYIIRRRPSTGSTVVWGGIVVLALLVTGMVRMESLVRYVVAVGITFHLELGPEIVALMLLQAVFELRVGLLSAFALRRSLTVREMVTTYFLLLVLELGLPSANLEDFWKWGDALAMGALIFRACTAEGKTGAGLLLMALMTQQDVVTVHHGLVCFLSAASACSIWRLLRGHREQKGLTWIVPLARLLGGEGSGIRLLAFWELSAHRGRRSFSEPLTVVGVMLTLASGMMRHTSQEALCALAVASFLLLMLVLGTRKMQLVAEWSGCVEWHPELVNEGGEVSLRVRQDAMGNFHLTELEKEERMMAFWLIAGLAASAIHWSGIIGVMGLWTLTKMLRSSRRSDLVFSGQGGRERGDRPFEVKDGVYRIFSPGLFWGQNQVGVGYGSKGVLHTMWHVTRGAALSIDDAVAGPYWADVREDVVCYGGAWSLEEKWKGETVQVHAFPPGKAHEVHQCQPGELILDTGRKLGAIPIDLVKGTSGSPILNAQGVVVGLYGNGLKTNETYVSSIAQGEAEKSRPNLPQAVVGTGWTSKGQITVLDMHPGSGKTHRVLPELIRQCIDRRLRTLVLAPTRVVLKEMERALNGKRVRFHSPAVSDQQAGGAIVDVMCHATYVNRRLLPQGRQNWEVAIMDEAHWTDPHSIAARGHLYTLAKENKCALVLMTATPPGKSEPFPESNGAITSEERQIPNGEWRDGFDWITEYEGRTAWFVPSIAKGGAIARTLRQKGKSVICLNSKTFEKDYSRVRDEKPDFVVTTDISEMGANLDVSRVIDGRTNIKPEEVDGKVELTGTRRVTTASAAQRRGRVGRQDGRTDEYIYSGQCDDDDSGLVQWKEAQILLDNITTLRGPVATFYGPEQDKMPEVAGHFRLTEEKRKHFRHLLTHCDFTPWLAWHVAANVSSVTDRSWTWEGPEANAVDEASGGLVTFRSPNGAERTLRPVWKDARMFKEGRDIKEFVAYASGRRSFGDVLTGMSGVPELLRHRCVSALDVFYTLMHEKPDSRAMRMAERDAPEAFLTMVEMMVLGLATLGVIWCFVVRTSISRMMLGTLVLLASLLLLWAGGVGYGNMAGVALIFYTLLTVLQPEAGKQRSSDDNKLAYFLLTLCSLAGLVAANEMGFLEKTKADLSTVLWSEREEPRPWSEWTNVDIQPARSWGTYVLVVSLFTPYIIHQLQTKIQQLVNSAVASGAQAMRDLGGGAPFFGVAGHVMTLGVVSLIGATPTSLMVGVGLAALHLAIVVSGLEAELTQRAHKVFFSAMVRNPMVDGDVINPFGEGEAKPALYERRMSLVLAIVLCLMSVVMNRTVASITEASAVGLAAAGQLLRPEADTLWTMPVACGMSGVVRGSLWGFLPLGHRLWLRASGGRRGGSEGDTLGDLWKRRLNNCTREEFFVYRRTGILETERDKARELLRRGETNMGLAVSRGTAKLAWLEERGYATLKGEVVDLGCGRGGWSYYAASRPAVMSVRAYTIGGRGHEAPKMVTSLGWNLIKFRSGMDVFSMQPHRADTVMCDIGESSPDAAVEGERTRKVILLMEQWKNRNPTAACVFKVLAPYRPEVIEALHRFQLQWGGGLVRTPFSRNSTHEMYYSTAVTGNIVNSVNVQSRKLLARFGDQRGPTRVPELDLGVGTRCVVLAEDKVKEQDVQERIKALREQYSETWHMDEEHPYRTWQYWGSYRTAPTGSAASLINGVVKLLSWPWNAREDVVRMAMTDTTAFGQQRVFKDKVDTKAQEPQPGTRVIMRAVNDWILERLAQKSKPRMCSREEFIAKVKSNAALGAWSDEQNRWASAREAVEDPAFWHLVDEERERHLMGRCAHCVYNMMGKREKKLGEFGVAKGSRAIWYMWLGSRFLEFEALGFLNEDHWASRESSGAGVEGISLNYLGWHLKKLSTLNGGLFYADDTAGWDTKVTNADLEDEEQILRYMEGEHKQLATTIMQKAYHAKVVKVARPSRDGGCIMDVITRRDQRGSGQVVTYALNTLTNIKVQLIRMMEGEGVIEAADAHNPRLLRVERWLKEHGEERLGRMLVSGDDCVVRPLDDRFGKALYFLNDMAKTRKDIGEWEHSAGLSSWEEVPFCSHHFHELVMKDGRTLVVPCRDQDELVGRARISPGCGWSVRETACLSKAYGQMWLLSYFHRRDLRTLGLAINSAVPVDWVPTGRTTWSIHASGAWMTTEDMLDVWNRVWILDNPFMQNKGKVMEWRDVPYLPKAQDMLCSSLVGRKERAEWAKNIWGAVEKVRKMIGPEKFKDYLSCMDRHDLHWELRLESSII.

Residues 1–30 (MVKKAILKGKGGGPPRRVSKETATKTRQPR) form a disordered region. At 1 to 98 (MVKKAILKGK…LQKRGKRRSA (98 aa)) the chain is on the cytoplasmic side. Residues 97–117 (SATDWMSWLLVITLLGMTIAA) constitute a propeptide, ER anchor for the capsid protein C, removed in mature form by serine protease NS3. A helical transmembrane segment spans residues 99 to 119 (TDWMSWLLVITLLGMTIAATV). At 120–242 (RKERDGSTVI…HLTRVEGWVW (123 aa)) the chain is on the extracellular side. Residue asparagine 144 is glycosylated (N-linked (GlcNAc...) asparagine; by host). Residues 243–260 (KNRLLALAMVTVVWLTLE) traverse the membrane as a helical segment. Position 261 (serine 261) is a topological domain, cytoplasmic. A helical transmembrane segment spans residues 262 to 280 (VVTRVAVLVVLLCLAPVYA). Residues 281–727 (SRCTHLENRD…HTVLGGAFNS (447 aa)) are Extracellular-facing. 6 disulfide bridges follow: cysteine 283–cysteine 310, cysteine 340–cysteine 396, cysteine 340–cysteine 401, cysteine 354–cysteine 385, cysteine 372–cysteine 396, and cysteine 372–cysteine 401. Residues 378 to 391 (DRGWGNHCGLFGKG) are fusion peptide. The N-linked (GlcNAc...) asparagine; by host glycan is linked to asparagine 434. Disulfide bonds link cysteine 466/cysteine 570 and cysteine 587/cysteine 618. A helical transmembrane segment spans residues 728 to 748 (IFGGVGFLPKLLLGVALAWLG). Residues 749–755 (LNMRNPT) are Extracellular-facing. Residues 756–776 (MSMSFLLAGVLVLAMTLGVGA) traverse the membrane as a helical segment. Over 777 to 1132 (DVGCAVDTER…RSMVVADNGE (356 aa)) the chain is Extracellular. 6 disulfide bridges follow: cysteine 780–cysteine 791, cysteine 831–cysteine 920, cysteine 955–cysteine 1000, cysteine 1057–cysteine 1106, cysteine 1068–cysteine 1090, and cysteine 1089–cysteine 1093. Asparagine 861, asparagine 983, and asparagine 999 each carry an N-linked (GlcNAc...) asparagine; by host glycan. The chain crosses the membrane as a helical span at residues 1133-1153 (LLSEGGVPGIVALFVVLEYII). Topologically, residues 1154 to 1158 (RRRPS) are cytoplasmic. A helical membrane pass occupies residues 1159-1179 (TGSTVVWGGIVVLALLVTGMV). The Lumenal segment spans residues 1180-1187 (RMESLVRY). The helical transmembrane segment at 1188–1208 (VVAVGITFHLELGPEIVALML) threads the bilayer. At 1209 to 1293 (LQAVFELRVG…LLMALMTQQD (85 aa)) the chain is on the cytoplasmic side. Residues 1294-1314 (VVTVHHGLVCFLSAASACSIW) form a helical membrane-spanning segment. At 1315-1327 (RLLRGHREQKGLT) the chain is on the lumenal side. A helical membrane pass occupies residues 1328–1348 (WIVPLARLLGGEGSGIRLLAF). Residues 1349 to 1359 (WELSAHRGRRS) lie on the Cytoplasmic side of the membrane. The helical transmembrane segment at 1360 to 1377 (FSEPLTVVGVMLTLASGM) threads the bilayer. At 1378 to 1382 (MRHTS) the chain is on the lumenal side. A helical membrane pass occupies residues 1383-1403 (QEALCALAVASFLLLMLVLGT). At 1404–1454 (RKMQLVAEWSGCVEWHPELVNEGGEVSLRVRQDAMGNFHLTELEKEERMMA) the chain is on the cytoplasmic side. The interval 1410–1449 (AEWSGCVEWHPELVNEGGEVSLRVRQDAMGNFHLTELEKE) is interacts with and activates NS3 protease. Positions 1455–1475 (FWLIAGLAASAIHWSGIIGVM) form an intramembrane region, helical. Over 1476–2160 (GLWTLTKMLR…RMAERDAPEA (685 aa)) the chain is Cytoplasmic. Positions 1490-1669 (SDLVFSGQGG…EAEKSRPNLP (180 aa)) constitute a Peptidase S7 domain. Active-site charge relay system; for serine protease NS3 activity residues include histidine 1543, aspartate 1567, and serine 1627. The Helicase ATP-binding domain maps to 1675–1831 (TGWTSKGQIT…ESNGAITSEE (157 aa)). Residue 1688 to 1695 (MHPGSGKT) coordinates ATP. The short motif at 1779–1782 (DEAH) is the DEAH box element. The Helicase C-terminal domain maps to 1841-2000 (DGFDWITEYE…TLRGPVATFY (160 aa)). An N6-acetyllysine; by host modification is found at lysine 1883. Residues 2161-2181 (FLTMVEMMVLGLATLGVIWCF) form a helical membrane-spanning segment. Over 2182–2189 (VVRTSISR) the chain is Lumenal. Positions 2190 to 2210 (MMLGTLVLLASLLLLWAGGVG) form an intramembrane region, helical. Residue tyrosine 2211 is a topological domain, lumenal. Residues 2212–2232 (GNMAGVALIFYTLLTVLQPEA) traverse the membrane as a helical segment. The Cytoplasmic segment spans residues 2233–2244 (GKQRSSDDNKLA). A helical transmembrane segment spans residues 2245–2265 (YFLLTLCSLAGLVAANEMGFL). The Lumenal portion of the chain corresponds to 2266–2299 (EKTKADLSTVLWSEREEPRPWSEWTNVDIQPARS). Positions 2300-2320 (WGTYVLVVSLFTPYIIHQLQT) form an intramembrane region, helical. At 2321 to 2343 (KIQQLVNSAVASGAQAMRDLGGG) the chain is on the lumenal side. The helical intramembrane region spans 2344–2364 (APFFGVAGHVMTLGVVSLIGA). Residues 2365–2368 (TPTS) lie on the Lumenal side of the membrane. The chain crosses the membrane as a helical span at residues 2369 to 2389 (LMVGVGLAALHLAIVVSGLEA). At 2390-2432 (ELTQRAHKVFFSAMVRNPMVDGDVINPFGEGEAKPALYERRMS) the chain is on the cytoplasmic side. A helical membrane pass occupies residues 2433-2453 (LVLAIVLCLMSVVMNRTVASI). Over 2454 to 2477 (TEASAVGLAAAGQLLRPEADTLWT) the chain is Lumenal. The helical transmembrane segment at 2478 to 2498 (MPVACGMSGVVRGSLWGFLPL) threads the bilayer. Over 2499–3414 (GHRLWLRASG…WELRLESSII (916 aa)) the chain is Cytoplasmic. In terms of domain architecture, mRNA cap 0-1 NS5-type MT spans 2512-2776 (GGSEGDTLGD…ELDLGVGTRC (265 aa)). Residue serine 2567 participates in S-adenosyl-L-methionine binding. At serine 2567 the chain carries Phosphoserine. Catalysis depends on lysine 2572, which acts as the For 2'-O-MTase activity. The S-adenosyl-L-methionine site is built by glycine 2597, tryptophan 2598, threonine 2615, isoleucine 2616, aspartate 2642, and valine 2643. The active-site For 2'-O-MTase activity is the aspartate 2657. Isoleucine 2658 lines the S-adenosyl-L-methionine pocket. Residues lysine 2694 and glutamate 2730 each act as for 2'-O-MTase activity in the active site. An interaction with host SCRIB region spans residues 2730–2734 (EMYYS). Tyrosine 2732 contributes to the S-adenosyl-L-methionine binding site. Zn(2+) contacts are provided by glutamate 2950, histidine 2954, cysteine 2959, and cysteine 2962. The region spanning 3040–3189 (GLFYADDTAG…RPLDDRFGKA (150 aa)) is the RdRp catalytic domain. Histidine 3224, cysteine 3240, and cysteine 3359 together coordinate Zn(2+).

It in the N-terminal section; belongs to the class I-like SAM-binding methyltransferase superfamily. mRNA cap 0-1 NS5-type methyltransferase family. In terms of assembly, homodimer. Interacts (via N-terminus) with host EXOC1 (via C-terminus); this interaction results in EXOC1 degradation through the proteasome degradation pathway. Forms heterodimers with envelope protein E in the endoplasmic reticulum and Golgi. As to quaternary structure, homodimer; in the endoplasmic reticulum and Golgi. Interacts with protein prM. Interacts with non-structural protein 1. In terms of assembly, homodimer; Homohexamer when secreted. Interacts with envelope protein E. Interacts (via N-terminus) with serine protease NS3. As to quaternary structure, forms a heterodimer with serine protease NS3. May form homooligomers. In terms of assembly, forms a heterodimer with NS2B. Interacts with NS4B. Interacts with unphosphorylated RNA-directed RNA polymerase NS5; this interaction stimulates RNA-directed RNA polymerase NS5 guanylyltransferase activity. Interacts with serine protease NS3. As to quaternary structure, homodimer. Interacts with host STAT2; this interaction inhibits the phosphorylation of the latter, and, when all viral proteins are present (polyprotein), targets STAT2 for degradation. Interacts with serine protease NS3. Interacts with host SCRIB; this interaction targets NS5 to the cell membrane periphery and nucleus, thereby allowing efficient host nuclear STAT1 inhibition. In terms of processing, specific enzymatic cleavages in vivo yield mature proteins. Cleavages in the lumen of endoplasmic reticulum are performed by host signal peptidase, whereas cleavages in the cytoplasmic side are performed by serine protease NS3. Signal cleavage at the 2K-4B site requires a prior NS3 protease-mediated cleavage at the 4A-2K site. Post-translationally, cleaved in post-Golgi vesicles by a host furin, releasing the mature small envelope protein M, and peptide pr. This cleavage is incomplete as up to 30% of viral particles still carry uncleaved prM. N-glycosylated. In terms of processing, N-glycosylated. The excreted form is glycosylated and this is required for efficient secretion of the protein from infected cells. Post-translationally, acetylated by host KAT5. Acetylation modulates NS3 RNA-binding and unwinding activities and plays an important positive role for viral replication. Phosphorylated on serines residues. This phosphorylation may trigger NS5 nuclear localization.

The protein resides in the virion. It is found in the host nucleus. The protein localises to the host cytoplasm. Its subcellular location is the host perinuclear region. It localises to the secreted. The protein resides in the virion membrane. It is found in the host endoplasmic reticulum membrane. The catalysed reaction is Selective hydrolysis of -Xaa-Xaa-|-Yaa- bonds in which each of the Xaa can be either Arg or Lys and Yaa can be either Ser or Ala.. It carries out the reaction RNA(n) + a ribonucleoside 5'-triphosphate = RNA(n+1) + diphosphate. It catalyses the reaction a ribonucleoside 5'-triphosphate + H2O = a ribonucleoside 5'-diphosphate + phosphate + H(+). The enzyme catalyses ATP + H2O = ADP + phosphate + H(+). The catalysed reaction is a 5'-end (5'-triphosphoguanosine)-ribonucleoside in mRNA + S-adenosyl-L-methionine = a 5'-end (N(7)-methyl 5'-triphosphoguanosine)-ribonucleoside in mRNA + S-adenosyl-L-homocysteine. It carries out the reaction a 5'-end (N(7)-methyl 5'-triphosphoguanosine)-ribonucleoside in mRNA + S-adenosyl-L-methionine = a 5'-end (N(7)-methyl 5'-triphosphoguanosine)-(2'-O-methyl-ribonucleoside) in mRNA + S-adenosyl-L-homocysteine + H(+). Its function is as follows. Plays a role in virus budding by binding to the cell membrane and gathering the viral RNA into a nucleocapsid that forms the core of a mature virus particle. During virus entry, may induce genome penetration into the host cytoplasm after hemifusion induced by the surface proteins. Can migrate to the cell nucleus where it modulates host functions. Inhibits RNA silencing by interfering with host Dicer. Functionally, prevents premature fusion activity of envelope proteins in trans-Golgi by binding to envelope protein E at pH6.0. After virion release in extracellular space, gets dissociated from E dimers. In terms of biological role, acts as a chaperone for envelope protein E during intracellular virion assembly by masking and inactivating envelope protein E fusion peptide. prM is the only viral peptide matured by host furin in the trans-Golgi network probably to avoid catastrophic activation of the viral fusion activity in acidic Golgi compartment prior to virion release. prM-E cleavage is inefficient, and many virions are only partially matured. These uncleaved prM would play a role in immune evasion. Its function is as follows. May play a role in virus budding. Exerts cytotoxic effects by activating a mitochondrial apoptotic pathway through M ectodomain. May display a viroporin activity. Binds to host cell surface receptor and mediates fusion between viral and cellular membranes. Envelope protein is synthesized in the endoplasmic reticulum in the form of heterodimer with protein prM. They play a role in virion budding in the ER, and the newly formed immature particle is covered with 60 spikes composed of heterodimer between precursor prM and envelope protein E. The virion is transported to the Golgi apparatus where the low pH causes dissociation of PrM-E heterodimers and formation of E homodimers. prM-E cleavage is inefficient, and many virions are only partially matured. These uncleaved prM would play a role in immune evasion. Functionally, involved in immune evasion, pathogenesis and viral replication. Once cleaved off the polyprotein, is targeted to three destinations: the viral replication cycle, the plasma membrane and the extracellular compartment. Essential for viral replication. Required for formation of the replication complex and recruitment of other non-structural proteins to the ER-derived membrane structures. Excreted as a hexameric lipoparticle that plays a role against host immune response. Antagonizing the complement function. Binds to the host macrophages and dendritic cells. Inhibits signal transduction originating from Toll-like receptor 3 (TLR3). In terms of biological role, component of the viral RNA replication complex that functions in virion assembly and antagonizes the host immune response. Its function is as follows. Required cofactor for the serine protease function of NS3. May have membrane-destabilizing activity and form viroporins. Displays three enzymatic activities: serine protease, NTPase and RNA helicase. NS3 serine protease, in association with NS2B, performs its autocleavage and cleaves the polyprotein at dibasic sites in the cytoplasm: C-prM, NS2A-NS2B, NS2B-NS3, NS3-NS4A, NS4A-2K and NS4B-NS5. NS3 RNA helicase binds RNA and unwinds dsRNA in the 3' to 5' direction. Functionally, regulates the ATPase activity of the NS3 helicase activity. NS4A allows NS3 helicase to conserve energy during unwinding. In terms of biological role, functions as a signal peptide for NS4B and is required for the interferon antagonism activity of the latter. Its function is as follows. Induces the formation of ER-derived membrane vesicles where the viral replication takes place. Inhibits interferon (IFN)-induced host STAT1 phosphorylation and nuclear translocation, thereby preventing the establishment of cellular antiviral state by blocking the IFN-alpha/beta pathway. Inhibits STAT2 translocation in the nucleus after IFN-alpha treatment. Replicates the viral (+) and (-) genome, and performs the capping of genomes in the cytoplasm. NS5 methylates viral RNA cap at guanine N-7 and ribose 2'-O positions. Besides its role in genome replication, also prevents the establishment of cellular antiviral state by blocking the interferon-alpha/beta (IFN-alpha/beta) signaling pathway. Inhibits host TYK2 and STAT2 phosphorylation, thereby preventing activation of JAK-STAT signaling pathway. The sequence is that of Genome polyprotein from Tick-borne encephalitis virus (strain Hypr) (TBEV).